Consider the following 104-residue polypeptide: Large ribosomal subunit protein bL21c (104 aa).

The protein belongs to the bacterial ribosomal protein bL21 family. Part of the 50S ribosomal subunit.

It localises to the plastid. The protein resides in the chloroplast. This protein binds to 23S rRNA. This is Large ribosomal subunit protein bL21c from Guillardia theta (Cryptophyte).